Here is a 254-residue protein sequence, read N- to C-terminus: Probable triosephosphate isomerase 2 (254 aa).

A substrate-binding site is contributed by 9–11 (NMK). Histidine 96 serves as the catalytic Electrophile. Glutamate 168 acts as the Proton acceptor in catalysis. Substrate-binding residues include glycine 174 and serine 212.

The protein belongs to the triosephosphate isomerase family. In terms of assembly, homodimer.

Its subcellular location is the cytoplasm. It catalyses the reaction D-glyceraldehyde 3-phosphate = dihydroxyacetone phosphate. It functions in the pathway carbohydrate biosynthesis; gluconeogenesis. The protein operates within carbohydrate degradation; glycolysis; D-glyceraldehyde 3-phosphate from glycerone phosphate: step 1/1. Functionally, involved in the gluconeogenesis. Catalyzes stereospecifically the conversion of dihydroxyacetone phosphate (DHAP) to D-glyceraldehyde-3-phosphate (G3P). This Listeria monocytogenes serotype 4b (strain F2365) protein is Probable triosephosphate isomerase 2.